A 994-amino-acid polypeptide reads, in one-letter code: Bifunctional glutamine synthetase adenylyltransferase/adenylyl-removing enzyme (994 aa).

An adenylyl removase region spans residues 1-487 (MVVTKLATQR…LHTKLFYQPL (487 aa)). Positions 492-994 (GPTGLEIAHG…KAVVRKVFGS (503 aa)) are adenylyl transferase.

The protein belongs to the GlnE family. Requires Mg(2+) as cofactor.

It carries out the reaction [glutamine synthetase]-O(4)-(5'-adenylyl)-L-tyrosine + phosphate = [glutamine synthetase]-L-tyrosine + ADP. It catalyses the reaction [glutamine synthetase]-L-tyrosine + ATP = [glutamine synthetase]-O(4)-(5'-adenylyl)-L-tyrosine + diphosphate. Its function is as follows. Involved in the regulation of glutamine synthetase GlnA, a key enzyme in the process to assimilate ammonia. When cellular nitrogen levels are high, the C-terminal adenylyl transferase (AT) inactivates GlnA by covalent transfer of an adenylyl group from ATP to specific tyrosine residue of GlnA, thus reducing its activity. Conversely, when nitrogen levels are low, the N-terminal adenylyl removase (AR) activates GlnA by removing the adenylyl group by phosphorolysis, increasing its activity. The regulatory region of GlnE binds the signal transduction protein PII (GlnB) which indicates the nitrogen status of the cell. This Mycobacterium bovis (strain ATCC BAA-935 / AF2122/97) protein is Bifunctional glutamine synthetase adenylyltransferase/adenylyl-removing enzyme.